A 161-amino-acid polypeptide reads, in one-letter code: Nucleotide-binding protein Bcep1808_2648 (161 aa).

This sequence belongs to the YajQ family.

Nucleotide-binding protein. The chain is Nucleotide-binding protein Bcep1808_2648 from Burkholderia vietnamiensis (strain G4 / LMG 22486) (Burkholderia cepacia (strain R1808)).